Consider the following 186-residue polypeptide: Probable nicotinate-nucleotide adenylyltransferase (186 aa).

Belongs to the NadD family.

It catalyses the reaction nicotinate beta-D-ribonucleotide + ATP + H(+) = deamido-NAD(+) + diphosphate. It participates in cofactor biosynthesis; NAD(+) biosynthesis; deamido-NAD(+) from nicotinate D-ribonucleotide: step 1/1. In terms of biological role, catalyzes the reversible adenylation of nicotinate mononucleotide (NaMN) to nicotinic acid adenine dinucleotide (NaAD). This is Probable nicotinate-nucleotide adenylyltransferase from Thermus thermophilus (strain ATCC 27634 / DSM 579 / HB8).